Here is a 901-residue protein sequence, read N- to C-terminus: MLIPSKLSRPVRLDHTVVRERLLAKLSGANNFRLALITSPAGYGKTTLISQWAAGKNDIGWYSLDEGDNQQERFASYLIAAVQQATNGHCAICETMAQKRQYASLTSLFAQLFIELAEWHSPLYLVIDDYHLITNPVIHESMRFFIRHQPENLTLVVLSRNLPQLGIANLRVRDQLLEIGSQQLAFTHQEAKQFFDCRLSSPIEAAESSRICDDVSGWATALQLIALSARQNTHSAHKSARRLAGINASHLSDYLVDEVLDNVDLATRHFLLKSAILRSMNDALITRVTGEENGQMRLEEIERQGLFLQRMDDTGEWFCYHPLFGNFLRQRCQWELAAELPEIHRAAAESWMAQGFPSEAIHHALAAGDALMLRDILLNHAWSLFNHSELSLLEESLKALPWDSLLENPQLVLLQAWLMQSQHRYGEVNTLLARAEHEIKDIREDTMHAEFNALRAQVAINDGNPDEAERLAKLALEELPPGWFYSRIVATSVLGEVLHCKGELTRSLALMQQTEQMARQHDVWHYALWSLIQQSEILFAQGFLQTAWETQEKAFQLINEQHLEQLPMHEFLVRIRAQLLWAWARLDEAEASARSGIEVLSSYQPQQQLQCLAMLIQCSLARGDLDNARSQLNRLENLLGNGKYHSDWISNANKVRVIYWQMTGDKAAAANWLRHTAKPEFANNHFLQGQWRNIARAQILLGEFEPAEIVLEELNENARSLRLMSDLNRNLLLLNQLYWQAGRKSDAQRVLLDALKLANRTGFISHFVIEGEAMAQQLRQLIQLNTLPELEQHRAQRILREINQHHRHKFAHFDENFVERLLNHPEVPELIRTSPLTQREWQVLGLIYSGYSNEQIAGELEVAATTIKTHIRNLYQKLGVAHRQAAVQHAQKLLKMMGYGV.

39-46 serves as a coordination point for ATP; the sequence is SPAGYGKT. The region spanning 829–894 is the HTH luxR-type domain; that stretch reads ELIRTSPLTQ…AAVQHAQKLL (66 aa). Residues 853–872 constitute a DNA-binding region (H-T-H motif); it reads NEQIAGELEVAATTIKTHIR.

This sequence belongs to the MalT family. As to quaternary structure, monomer in solution. Oligomerizes to an active state in the presence of the positive effectors ATP and maltotriose.

Its activity is regulated as follows. Activated by ATP and maltotriose, which are both required for DNA binding. Functionally, positively regulates the transcription of the maltose regulon whose gene products are responsible for uptake and catabolism of malto-oligosaccharides. Specifically binds to the promoter region of its target genes, recognizing a short DNA motif called the MalT box. This chain is HTH-type transcriptional regulator MalT, found in Escherichia coli O139:H28 (strain E24377A / ETEC).